A 249-amino-acid chain; its full sequence is Green-light absorbing proteorhodopsin (249 aa).

The N-terminal stretch at 1–17 (MKLLLILGSVIALPTFA) is a signal peptide. 7 helical membrane passes run 30–49 (GVSF…FFFV), 62–84 (LTVS…GVWI), 99–121 (LLTV…NVAG), 128–147 (LVGS…GIMA), 151–168 (AFII…ELWA), 189–211 (MMYI…YLMG), and 221–243 (LIYN…NVAV). Residue Lys-231 is modified to N6-(retinylidene)lysine.

This sequence belongs to the archaeal/bacterial/fungal opsin family. In terms of processing, contains one covalently linked retinal chromophore.

It localises to the cell membrane. Functionally, light-driven proton pump that generates photothrophic energy. In Gamma-proteobacterium EBAC31A08, this protein is Green-light absorbing proteorhodopsin.